The sequence spans 56 residues: Large ribosomal subunit protein bL32 (56 aa).

The disordered stretch occupies residues Met1–Leu38. Basic residues predominate over residues Lys7–Arg16.

This sequence belongs to the bacterial ribosomal protein bL32 family.

This Histophilus somni (strain 129Pt) (Haemophilus somnus) protein is Large ribosomal subunit protein bL32.